A 241-amino-acid polypeptide reads, in one-letter code: Putative integrase ORF241 (241 aa).

A Tyr recombinase domain is found at 82–241 (VEAKKTLVSA…AIEMLRKLAD (160 aa)). Active-site residues include Arg-119, Lys-144, His-191, Arg-194, and His-217. Tyr-226 serves as the catalytic O-(3'-phospho-DNA)-tyrosine intermediate.

Belongs to the 'phage' integrase family.

Its function is as follows. This protein may encode an integrase, which is necessary for integration of the viral DNA into host genome. The chain is Putative integrase ORF241 from Acidianus convivator (ATV).